We begin with the raw amino-acid sequence, 208 residues long: Dephospho-CoA kinase (208 aa).

The DPCK domain occupies 5–201 (IVALTGGIGS…QRYLALAASA (197 aa)). Position 13–18 (13–18 (GSGKST)) interacts with ATP.

Belongs to the CoaE family.

It localises to the cytoplasm. It catalyses the reaction 3'-dephospho-CoA + ATP = ADP + CoA + H(+). Its pathway is cofactor biosynthesis; coenzyme A biosynthesis; CoA from (R)-pantothenate: step 5/5. Catalyzes the phosphorylation of the 3'-hydroxyl group of dephosphocoenzyme A to form coenzyme A. This chain is Dephospho-CoA kinase, found in Sodalis glossinidius (strain morsitans).